A 539-amino-acid chain; its full sequence is Protein ENTREP2 (539 aa).

The next 4 helical transmembrane spans lie at 31–51, 65–85, 89–109, and 176–196; these read IVLA…AVSF, SCPF…VVSW, LSLV…LNLA, and LLFS…LATA. Positions 301-481 are disordered; the sequence is VVGQPPASQV…TSKERPRSLV (181 aa). A compositionally biased stretch (polar residues) spans 306–331; sequence PASQVTSIGQQVAESSSGDPNTSAGF. Residues 347–365 show a composition bias toward low complexity; the sequence is GTATPGSSPSPDGPVGAPA. Over residues 395–408 the composition is skewed to polar residues; it reads SRSTSDPTLCTSSM.

It belongs to the ENTREP family.

The protein localises to the membrane. This Homo sapiens (Human) protein is Protein ENTREP2.